A 146-amino-acid polypeptide reads, in one-letter code: 2S sulfur-rich seed storage protein 1 (146 aa).

The signal sequence occupies residues 1–22; the sequence is MAKISVAAAALLVLMALGHATA. Residues 23–36 constitute a propeptide that is removed on maturation; it reads FRATVTTTVVEEEN. Pyrrolidone carboxylic acid is present on Q37. 4 disulfides stabilise this stretch: C40–C92, C53–C81, C82–C130, and C94–C137. A propeptide spanning residues 65–69 is cleaved from the precursor; that stretch reads PYQTM. A propeptide spanning residues 143-146 is cleaved from the precursor; that stretch reads IAGF.

It belongs to the 2S seed storage albumins family. As to quaternary structure, the mature protein consists of a small and a large chain linked by disulfide bonds.

This is a 2S seed storage protein. The protein is 2S sulfur-rich seed storage protein 1 (BE2S1) of Bertholletia excelsa (Brazil nut).